Reading from the N-terminus, the 234-residue chain is MTQQLNVDPAEIKKFEDMASRWWDLEGEFKPLHQINPLRLNYVLENANGLFGKKVLDVGCGGGILAESMAKQGADVIGLDMGKEPLTVARLHALETGTKLEYVQSTAEQHAEENPETYDVVTCMEMLEHVPDPLSVIRSCAKMVKPGGHVFFSTLNRNIKSYLFAIVGAEQLLKLVPKGTHDHNKFIRPSELLKMLDQTALQERGITGLHYNPLTDTYSLGKNVDVNYIVHTTL.

Positions 39, 59, 80, and 124 each coordinate S-adenosyl-L-methionine.

The protein belongs to the methyltransferase superfamily. UbiG/COQ3 family.

It carries out the reaction a 3-demethylubiquinol + S-adenosyl-L-methionine = a ubiquinol + S-adenosyl-L-homocysteine + H(+). The catalysed reaction is a 3-(all-trans-polyprenyl)benzene-1,2-diol + S-adenosyl-L-methionine = a 2-methoxy-6-(all-trans-polyprenyl)phenol + S-adenosyl-L-homocysteine + H(+). The protein operates within cofactor biosynthesis; ubiquinone biosynthesis. In terms of biological role, O-methyltransferase that catalyzes the 2 O-methylation steps in the ubiquinone biosynthetic pathway. The protein is Ubiquinone biosynthesis O-methyltransferase of Aliivibrio fischeri (strain ATCC 700601 / ES114) (Vibrio fischeri).